A 454-amino-acid polypeptide reads, in one-letter code: MDIKFLYDNHETLKEQKVTIIGRVRSNRQGKAVSFMVLNDGTVLNDLQVVYKPETFGFEQGSKARVSSIVEIEGILIPTPTRPQPFEINATSITLLDQAIEEYPLQKKEHSPEFLREISHLRARTKTFQAIFRIRSTAAFAIHKFFQENNYVYVTTPIITSNDAEGAGEQFVVTVNEDKDYANDFFGKKASLTVSGQLNGEAFAQAFKNIYTFGPTFRAENSHTTKHASEFWMIEPEVAFADINDNIQLMQDMLKSVVGYVLEKNMTELEFLQEQLEPGLIDKITGIVNVEFKVNTYEEVLKTLQDAIDKGHKFEENNIHFGLDLGTEHERFICEEVNKCPTFVINYPKDIKSFYMKQNDDGKTVAAVDLLVPGIGELCGGSEREANLDKILERCEFYGINPEELDWYIGLRKYGFYKSAGFGLGFERLIMYITGASNIRDVIPFPRTPKTLLY.

It belongs to the class-II aminoacyl-tRNA synthetase family. Homodimer.

The protein resides in the cytoplasm. It catalyses the reaction tRNA(Asn) + L-asparagine + ATP = L-asparaginyl-tRNA(Asn) + AMP + diphosphate + H(+). This is Asparagine--tRNA ligase from Mesoplasma florum (strain ATCC 33453 / NBRC 100688 / NCTC 11704 / L1) (Acholeplasma florum).